The primary structure comprises 227 residues: Leucyl/phenylalanyl-tRNA--protein transferase (227 aa).

The protein belongs to the L/F-transferase family.

The protein localises to the cytoplasm. The catalysed reaction is N-terminal L-lysyl-[protein] + L-leucyl-tRNA(Leu) = N-terminal L-leucyl-L-lysyl-[protein] + tRNA(Leu) + H(+). It catalyses the reaction N-terminal L-arginyl-[protein] + L-leucyl-tRNA(Leu) = N-terminal L-leucyl-L-arginyl-[protein] + tRNA(Leu) + H(+). It carries out the reaction L-phenylalanyl-tRNA(Phe) + an N-terminal L-alpha-aminoacyl-[protein] = an N-terminal L-phenylalanyl-L-alpha-aminoacyl-[protein] + tRNA(Phe). Its function is as follows. Functions in the N-end rule pathway of protein degradation where it conjugates Leu, Phe and, less efficiently, Met from aminoacyl-tRNAs to the N-termini of proteins containing an N-terminal arginine or lysine. The chain is Leucyl/phenylalanyl-tRNA--protein transferase from Afipia carboxidovorans (strain ATCC 49405 / DSM 1227 / KCTC 32145 / OM5) (Oligotropha carboxidovorans).